A 202-amino-acid chain; its full sequence is Glycerol-3-phosphate acyltransferase (202 aa).

The next 6 helical transmembrane spans lie at 3 to 23, 61 to 81, 87 to 107, 118 to 138, 144 to 164, and 167 to 187; these read NLII…LILA, IATI…LKFL, LLWS…YLLF, GAMI…WVVI, ISSL…FIFN, and LEIH…YKHL.

The protein belongs to the PlsY family. Probably interacts with PlsX.

The protein resides in the cell inner membrane. It catalyses the reaction an acyl phosphate + sn-glycerol 3-phosphate = a 1-acyl-sn-glycero-3-phosphate + phosphate. It participates in lipid metabolism; phospholipid metabolism. In terms of biological role, catalyzes the transfer of an acyl group from acyl-phosphate (acyl-PO(4)) to glycerol-3-phosphate (G3P) to form lysophosphatidic acid (LPA). This enzyme utilizes acyl-phosphate as fatty acyl donor, but not acyl-CoA or acyl-ACP. This is Glycerol-3-phosphate acyltransferase from Campylobacter jejuni subsp. jejuni serotype O:6 (strain 81116 / NCTC 11828).